A 140-amino-acid polypeptide reads, in one-letter code: Large ribosomal subunit protein bL17 (140 aa).

This sequence belongs to the bacterial ribosomal protein bL17 family. In terms of assembly, part of the 50S ribosomal subunit. Contacts protein L32.

This is Large ribosomal subunit protein bL17 from Roseobacter denitrificans (strain ATCC 33942 / OCh 114) (Erythrobacter sp. (strain OCh 114)).